A 966-amino-acid polypeptide reads, in one-letter code: Mitogen-activated protein kinase kinase kinase 13 (966 aa).

Disordered stretches follow at residues methionine 1–lysine 22 and serine 93–glycine 112. Residues alanine 96–glycine 112 are compositionally biased toward polar residues. The Protein kinase domain maps to isoleucine 168–isoleucine 409. ATP is bound by residues leucine 174–valine 182 and lysine 195. Aspartate 279 functions as the Proton acceptor in the catalytic mechanism. Leucine-zipper stretches follow at residues valine 433 to leucine 454 and leucine 486 to valine 507. Disordered regions lie at residues lysine 534–histidine 652, aspartate 744–arginine 834, serine 846–leucine 873, and aspartate 887–leucine 906. A compositionally biased stretch (low complexity) spans serine 567–lysine 581. Basic residues predominate over residues serine 582–asparagine 594. Composition is skewed to polar residues over residues glutamine 609–proline 629 and phenylalanine 781–leucine 795. Acidic residues predominate over residues aspartate 814–valine 827. Residues serine 815–glutamate 828 are acidic. Polar residues predominate over residues serine 846–valine 855.

The protein belongs to the protein kinase superfamily. STE Ser/Thr protein kinase family. MAP kinase kinase kinase subfamily. As to quaternary structure, homodimer; forms dimers through the leucine-zipper motif. Interacts with the C-terminus of MAPK8IP1 through the kinase catalytic domain. Binds PRDX3. Associates with the IKK complex through the kinase domain. Requires Mg(2+) as cofactor. Post-translationally, autophosphorylated on serine and threonine residues.

Its subcellular location is the cytoplasm. The protein resides in the membrane. The enzyme catalyses L-seryl-[protein] + ATP = O-phospho-L-seryl-[protein] + ADP + H(+). The catalysed reaction is L-threonyl-[protein] + ATP = O-phospho-L-threonyl-[protein] + ADP + H(+). Its activity is regulated as follows. Activated by autophosphorylation and homodimerization. Its function is as follows. Activates the JUN N-terminal pathway through activation of the MAP kinase kinase MAP2K7. Acts synergistically with PRDX3 to regulate the activation of NF-kappa-B in the cytosol. This activation is kinase-dependent and involves activating the IKK complex, the IKBKB-containing complex that phosphorylates inhibitors of NF-kappa-B. This Pongo abelii (Sumatran orangutan) protein is Mitogen-activated protein kinase kinase kinase 13.